A 232-amino-acid polypeptide reads, in one-letter code: tRNA1(Val) (adenine(37)-N6)-methyltransferase (232 aa).

Belongs to the methyltransferase superfamily. tRNA (adenine-N(6)-)-methyltransferase family.

The protein resides in the cytoplasm. It carries out the reaction adenosine(37) in tRNA1(Val) + S-adenosyl-L-methionine = N(6)-methyladenosine(37) in tRNA1(Val) + S-adenosyl-L-homocysteine + H(+). Its function is as follows. Specifically methylates the adenine in position 37 of tRNA(1)(Val) (anticodon cmo5UAC). In Haemophilus influenzae (strain PittEE), this protein is tRNA1(Val) (adenine(37)-N6)-methyltransferase.